The primary structure comprises 296 residues: MGTPWRKRKGIAGPGLPNLSCALVLCLSRSQPRTQVGTMSPAIALAFLPLVVTLLVRYRHYFRLLVGTVLLRSLRDCLSGLRIEERAFSYVLTHALPGDPGHILTTLDHWSSHCEYLSHMGPVKGQILMRLVEEKAPACVLELGTYCGYSTLLIAQALPPGGRLLTVERDPRTAAVAEKLIRLAGFDEHMVELIVGSSEEVIPCLRTQYQLSRADLVLLIHRPRCYLRDLQLLEAHALLPAGATVLADHVLFPGAPRFLQYAKSCGRYRCRLYHTGLPDFPAIKDGIAQLTYAGPG.

The helical transmembrane segment at 36–56 (VGTMSPAIALAFLPLVVTLLV) threads the bilayer. S-adenosyl-L-methionine is bound by residues glutamate 142, 144-145 (GT), serine 150, glutamate 168, and serine 198.

The protein belongs to the class I-like SAM-binding methyltransferase superfamily. Cation-dependent O-methyltransferase family. Interacts with LHFPL5, PCDH15, TMC1, TMC2 and TMIE. Interacts directly with TMC1. The interaction of TOMT with TMC1 and TMC2 is required for the transportation of TMC1/2 into the stereocilia of hair cells.

It is found in the membrane. The protein resides in the cytoplasm. It localises to the endoplasmic reticulum. It catalyses the reaction a catechol + S-adenosyl-L-methionine = a guaiacol + S-adenosyl-L-homocysteine + H(+). Functionally, catalyzes the O-methylation, and thereby the inactivation, of catecholamine neurotransmitters and catechol hormones. Required for auditory function. Component of the cochlear hair cell's mechanotransduction (MET) machinery. Involved in the assembly of the asymmetric tip-link MET complex. Required for transportation of TMC1 and TMC2 proteins into the mechanically sensitive stereocilia of the hair cells. The function in MET is independent of the enzymatic activity. This is Transmembrane O-methyltransferase from Macaca mulatta (Rhesus macaque).